Reading from the N-terminus, the 888-residue chain is Tyrosine-protein kinase receptor UFO (888 aa).

A signal peptide spans 1-18 (MGRVPLAWWLALCCWGCA). The interaction with GAS6 stretch occupies residues 19-86 (AHKDTQTEAG…QTQVPLGEDW (68 aa)). The Extracellular portion of the chain corresponds to 19-445 (AHKDTQTEAG…PPRAFSWPWW (427 aa)). Ig-like C2-type domains lie at 30–122 (PFVG…TFVS) and 133–216 (PYFL…ATIT). An N-linked (GlcNAc...) asparagine glycan is attached at N37. C50 and C111 form a disulfide bridge. N-linked (GlcNAc...) asparagine glycans are attached at residues N151 and N192. The cysteines at positions 154 and 199 are disulfide-linked. Fibronectin type-III domains are found at residues 221 to 325 (RPHH…TTEG) and 330 to 422 (PPEN…PWRP). N-linked (GlcNAc...) asparagine glycosylation is found at N333, N339, and N395. A helical transmembrane segment spans residues 446-466 (YVLLGALVAAACVLILALFLV). Residues 467–888 (HRRKKETRYG…PAPPGQEDGA (422 aa)) are Cytoplasmic-facing. The 272-residue stretch at 530–801 (VALGKTLGEG…ELREDLENTL (272 aa)) folds into the Protein kinase domain. ATP is bound by residues 536–544 (LGEGEFGAV) and K561. Catalysis depends on D666, which acts as the Proton acceptor. Y697, Y773, and Y815 each carry phosphotyrosine; by autocatalysis. Residues 820–846 (EGGSHLEPRGAAGGADPPTQPDPKDSC) are disordered. The residue at position 860 (Y860) is a Phosphotyrosine; by autocatalysis. A disordered region spans residues 865 to 888 (STAPGPTLSADRGCPAPPGQEDGA).

The protein belongs to the protein kinase superfamily. Tyr protein kinase family. AXL/UFO subfamily. As to quaternary structure, heterodimer and heterotetramer with ligand GAS6. Interacts with CBL, GRB2, LCK, NCK2, PIK3R1, PIK3R2, PIK3R3, PLCG1, SOCS1 and TNS2. Part of a complex including AXL, TNK2 and GRB2, in which GRB2 promotes AXL recruitment by TNK2. In terms of processing, monoubiquitinated upon GAS6-binding. A very small proportion of the receptor could be subjected to polyubiquitination in a very transient fashion. Post-translationally, phosphorylated at tyrosine residues by autocatalysis, which activates kinase activity. As to expression, in distinct substructures of a broad spectrum of developing tissues (in the late embryogenesis). In cells forming organ capsules as well as in connective tissue structures (in adult).

Its subcellular location is the cell membrane. The enzyme catalyses L-tyrosyl-[protein] + ATP = O-phospho-L-tyrosyl-[protein] + ADP + H(+). Its activity is regulated as follows. Activated by GAS6-binding and subsequent autophosphorylation. In terms of biological role, receptor tyrosine kinase that transduces signals from the extracellular matrix into the cytoplasm by binding growth factor GAS6 and which is thus regulating many physiological processes including cell survival, cell proliferation, migration and differentiation. Ligand binding at the cell surface induces dimerization and autophosphorylation of AXL. Following activation by ligand, AXL binds and induces tyrosine phosphorylation of PI3-kinase subunits PIK3R1, PIK3R2 and PIK3R3; but also GRB2, PLCG1, LCK and PTPN11. Other downstream substrate candidates for AXL are CBL, NCK2, SOCS1 and TNS2. Recruitment of GRB2 and phosphatidylinositol 3 kinase regulatory subunits by AXL leads to the downstream activation of the AKT kinase. GAS6/AXL signaling plays a role in various processes such as endothelial cell survival during acidification by preventing apoptosis, optimal cytokine signaling during human natural killer cell development, hepatic regeneration, gonadotropin-releasing hormone neuron survival and migration, platelet activation, or regulation of thrombotic responses. Also plays an important role in inhibition of Toll-like receptors (TLRs)-mediated innate immune response. The protein is Tyrosine-protein kinase receptor UFO (Axl) of Mus musculus (Mouse).